Reading from the N-terminus, the 460-residue chain is Indoleacetamide hydrolase (460 aa).

Residues lysine 71 and serine 146 each act as charge relay system in the active site. Serine 169 functions as the Acyl-ester intermediate in the catalytic mechanism.

It belongs to the amidase family.

It functions in the pathway plant hormone metabolism; auxin biosynthesis. Hydrolyzes indole-3-acetamide (IAM) into indole-3-acetic acid (IAA). This Pantoea agglomerans pv. gypsophilae (Erwinia herbicola) protein is Indoleacetamide hydrolase (iaaH).